Here is a 360-residue protein sequence, read N- to C-terminus: Photosystem II protein D1 (360 aa).

The next 3 membrane-spanning stretches (helical) occupy residues 29-46 (YIGW…TATS), 118-133 (HFLT…EWEL), and 142-156 (WISV…AAAA). A chlorophyll a-binding site is contributed by His118. Tyr126 is a binding site for pheophytin a. [CaMn4O5] cluster-binding residues include Asp170 and Glu189. A helical transmembrane segment spans residues 197–218 (FHQLGVAGVFGGSLFSAMHGSL). His198 is a binding site for chlorophyll a. A quinone is bound by residues His215 and 264–265 (SF). His215 contributes to the Fe cation binding site. His272 contributes to the Fe cation binding site. A helical membrane pass occupies residues 274 to 288 (FLGLWPVVGIWLTAL). [CaMn4O5] cluster is bound by residues His332, Glu333, Asp342, and Ala344. The propeptide occupies 345-360 (SGESLPVALTAPAVNG).

This sequence belongs to the reaction center PufL/M/PsbA/D family. PSII is composed of 1 copy each of membrane proteins PsbA, PsbB, PsbC, PsbD, PsbE, PsbF, PsbH, PsbI, PsbJ, PsbK, PsbL, PsbM, PsbT, PsbX, PsbY, PsbZ, Psb30/Ycf12, at least 3 peripheral proteins of the oxygen-evolving complex and a large number of cofactors. It forms dimeric complexes. The D1/D2 heterodimer binds P680, chlorophylls that are the primary electron donor of PSII, and subsequent electron acceptors. It shares a non-heme iron and each subunit binds pheophytin, quinone, additional chlorophylls, carotenoids and lipids. D1 provides most of the ligands for the Mn4-Ca-O5 cluster of the oxygen-evolving complex (OEC). There is also a Cl(-1) ion associated with D1 and D2, which is required for oxygen evolution. The PSII complex binds additional chlorophylls, carotenoids and specific lipids. serves as cofactor. Tyr-161 forms a radical intermediate that is referred to as redox-active TyrZ, YZ or Y-Z. In terms of processing, C-terminally processed by CTPA; processing is essential to allow assembly of the oxygen-evolving complex and thus photosynthetic growth.

Its subcellular location is the plastid. The protein resides in the chloroplast thylakoid membrane. It carries out the reaction 2 a plastoquinone + 4 hnu + 2 H2O = 2 a plastoquinol + O2. In terms of biological role, photosystem II (PSII) is a light-driven water:plastoquinone oxidoreductase that uses light energy to abstract electrons from H(2)O, generating O(2) and a proton gradient subsequently used for ATP formation. It consists of a core antenna complex that captures photons, and an electron transfer chain that converts photonic excitation into a charge separation. The D1/D2 (PsbA/PsbD) reaction center heterodimer binds P680, the primary electron donor of PSII as well as several subsequent electron acceptors. The protein is Photosystem II protein D1 of Porphyra purpurea (Red seaweed).